Reading from the N-terminus, the 567-residue chain is Dihydroxy-acid dehydratase (567 aa).

Position 52 (cysteine 52) interacts with [2Fe-2S] cluster. Aspartate 84 serves as a coordination point for Mg(2+). A [2Fe-2S] cluster-binding site is contributed by cysteine 125. The Mg(2+) site is built by aspartate 126 and lysine 127. Residue lysine 127 is modified to N6-carboxylysine. Position 197 (cysteine 197) interacts with [2Fe-2S] cluster. Glutamate 448 serves as a coordination point for Mg(2+). Serine 474 serves as the catalytic Proton acceptor.

The protein belongs to the IlvD/Edd family. In terms of assembly, homodimer. [2Fe-2S] cluster serves as cofactor. It depends on Mg(2+) as a cofactor.

The enzyme catalyses (2R)-2,3-dihydroxy-3-methylbutanoate = 3-methyl-2-oxobutanoate + H2O. It catalyses the reaction (2R,3R)-2,3-dihydroxy-3-methylpentanoate = (S)-3-methyl-2-oxopentanoate + H2O. It participates in amino-acid biosynthesis; L-isoleucine biosynthesis; L-isoleucine from 2-oxobutanoate: step 3/4. The protein operates within amino-acid biosynthesis; L-valine biosynthesis; L-valine from pyruvate: step 3/4. In terms of biological role, functions in the biosynthesis of branched-chain amino acids. Catalyzes the dehydration of (2R,3R)-2,3-dihydroxy-3-methylpentanoate (2,3-dihydroxy-3-methylvalerate) into 2-oxo-3-methylpentanoate (2-oxo-3-methylvalerate) and of (2R)-2,3-dihydroxy-3-methylbutanoate (2,3-dihydroxyisovalerate) into 2-oxo-3-methylbutanoate (2-oxoisovalerate), the penultimate precursor to L-isoleucine and L-valine, respectively. The sequence is that of Dihydroxy-acid dehydratase from Streptococcus pneumoniae serotype 2 (strain D39 / NCTC 7466).